Consider the following 126-residue polypeptide: Large ribosomal subunit protein bL12 (126 aa).

Belongs to the bacterial ribosomal protein bL12 family. As to quaternary structure, homodimer. Part of the ribosomal stalk of the 50S ribosomal subunit. Forms a multimeric L10(L12)X complex, where L10 forms an elongated spine to which 2 to 4 L12 dimers bind in a sequential fashion. Binds GTP-bound translation factors.

In terms of biological role, forms part of the ribosomal stalk which helps the ribosome interact with GTP-bound translation factors. Is thus essential for accurate translation. The polypeptide is Large ribosomal subunit protein bL12 (Acidovorax sp. (strain JS42)).